The primary structure comprises 132 residues: MMNGENMDKQTVIGFVVLFCVLELVFYLKKLYQSMALTLAVFGIFSLLFFLLYIPVLSKKAVPYVINYFKPPHQRVREIKVGSDETTDNSIIRLKEKAKTLHPDEGNRISGRSSNSFKDSASCIITIVDDSN.

Transmembrane regions (helical) follow at residues 12–32 and 37–57; these read VIGFVVLFCVLELVFYLKKLY and LTLAVFGIFSLLFFLLYIPVL.

The protein resides in the cell membrane. This is an uncharacterized protein from Methanocaldococcus jannaschii (strain ATCC 43067 / DSM 2661 / JAL-1 / JCM 10045 / NBRC 100440) (Methanococcus jannaschii).